Here is a 316-residue protein sequence, read N- to C-terminus: Large ribosomal subunit protein uL10 (316 aa).

The disordered stretch occupies residues 282 to 316 (ASAAKADEPKKEEAKKVEEEEEEEEDGFMGFGMFD). Basic and acidic residues predominate over residues 286-299 (KADEPKKEEAKKVE).

The protein belongs to the universal ribosomal protein uL10 family. As to quaternary structure, P0 forms a pentameric complex by interaction with dimers of P1 and P2. Post-translationally, phosphorylated.

Its function is as follows. Ribosomal protein P0 is the functional equivalent of E.coli protein L10. The protein is Large ribosomal subunit protein uL10 (RPLP0) of Plasmodium falciparum (isolate 7G8).